A 78-amino-acid polypeptide reads, in one-letter code: uncharacterized protein (78 aa).

2 helical membrane passes run 5–24 (LALL…IKLM) and 39–61 (LWLQ…AGFI).

The protein localises to the cell membrane. This is an uncharacterized protein from Bacillus subtilis (strain 168).